Consider the following 638-residue polypeptide: 1-deoxy-D-xylulose-5-phosphate synthase (638 aa).

Residues His-79 and 120 to 122 (AHS) contribute to the thiamine diphosphate site. Asp-151 is a Mg(2+) binding site. Residues 152–153 (GA), Asn-180, Tyr-289, and Glu-371 each bind thiamine diphosphate. Asn-180 lines the Mg(2+) pocket.

This sequence belongs to the transketolase family. DXPS subfamily. As to quaternary structure, homodimer. The cofactor is Mg(2+). Requires thiamine diphosphate as cofactor.

The enzyme catalyses D-glyceraldehyde 3-phosphate + pyruvate + H(+) = 1-deoxy-D-xylulose 5-phosphate + CO2. Its pathway is metabolic intermediate biosynthesis; 1-deoxy-D-xylulose 5-phosphate biosynthesis; 1-deoxy-D-xylulose 5-phosphate from D-glyceraldehyde 3-phosphate and pyruvate: step 1/1. Catalyzes the acyloin condensation reaction between C atoms 2 and 3 of pyruvate and glyceraldehyde 3-phosphate to yield 1-deoxy-D-xylulose-5-phosphate (DXP). This is 1-deoxy-D-xylulose-5-phosphate synthase from Rhizobium etli (strain ATCC 51251 / DSM 11541 / JCM 21823 / NBRC 15573 / CFN 42).